The following is a 382-amino-acid chain: Opsin Rh5 (382 aa).

Residues 1–49 lie on the Extracellular side of the membrane; sequence MHINGPSGPQAYVNDSLGDGSVFPMGHGYPAEYQHMVHAHWRGFREAPI. A glycan (N-linked (GlcNAc...) asparagine) is linked at Asn14. A helical transmembrane segment spans residues 50-76; that stretch reads YYHAGFYIAFIVLMLSSIFGNGLVIWI. At 77–88 the chain is on the cytoplasmic side; that stretch reads FSTSKSLRTPSN. The helical transmembrane segment at 89–112 threads the bilayer; the sequence is LLILNLAIFDLFMCTNMPHYLINA. Residues 113–127 are Extracellular-facing; the sequence is TVGYIVGGDLGCDIY. Cys124 and Cys201 are joined by a disulfide. A helical transmembrane segment spans residues 128 to 147; sequence ALNGGISGMGASITNAFIAF. Over 148 to 165 the chain is Cytoplasmic; that stretch reads DRYKTISNPIDGRLSYGQ. A helical membrane pass occupies residues 166–190; it reads IVLLILFTWLWATPFSVLPLFQIWG. At 191–214 the chain is on the extracellular side; sequence RYQPEGFLTTCSFDYLTNTDENRL. Residues 215–242 traverse the membrane as a helical segment; it reads FVRTIFVWSYVIPMTMILVSYYKLFTHV. Residues 243-278 lie on the Cytoplasmic side of the membrane; the sequence is RVHEKMLAEQAKKMNVKSLSANANADNMSVELRIAK. Residues 279-302 traverse the membrane as a helical segment; it reads AALIIYMLFILAWTPYSVVALIGC. Over 303-310 the chain is Extracellular; it reads FGEQQLIT. A helical membrane pass occupies residues 311 to 335; that stretch reads PFVSMLPCLACKSVSCLDPWVYATS. N6-(retinylidene)lysine is present on Lys322. The Cytoplasmic segment spans residues 336–382; that stretch reads HPKYRLELERRLPWLGIREKHATSGTSGGQESVASVSGDTLALSVQN. Positions 357-382 are disordered; that stretch reads ATSGTSGGQESVASVSGDTLALSVQN. Residues 358–382 show a composition bias toward polar residues; that stretch reads TSGTSGGQESVASVSGDTLALSVQN.

Belongs to the G-protein coupled receptor 1 family. Opsin subfamily. In terms of processing, phosphorylated on some or all of the serine and threonine residues present in the C-terminal region. Expressed specifically in the retina. Each Drosophila eye is composed of 800 facets or ommatidia. Each ommatidium contains 8 photoreceptor cells (R1-R8), the R1 to R6 cells are outer cells, while R7 and R8 are inner cells. Rh5 is expressed only in R8 photoreceptor cells in a subset of ommatidia.

It localises to the cell projection. It is found in the rhabdomere membrane. Functionally, visual pigments are the light-absorbing molecules that mediate vision. They consist of an apoprotein, opsin, covalently linked to cis-retinal. This is Opsin Rh5 (Rh5) from Drosophila melanogaster (Fruit fly).